The following is a 306-amino-acid chain: Aspartate carbamoyltransferase catalytic subunit (306 aa).

Positions 53 and 54 each coordinate carbamoyl phosphate. Residue K82 participates in L-aspartate binding. Residues R103, H131, and Q134 each coordinate carbamoyl phosphate. Positions 164 and 226 each coordinate L-aspartate. Residues L263 and P264 each coordinate carbamoyl phosphate.

This sequence belongs to the aspartate/ornithine carbamoyltransferase superfamily. ATCase family. In terms of assembly, heterododecamer (2C3:3R2) of six catalytic PyrB chains organized as two trimers (C3), and six regulatory PyrI chains organized as three dimers (R2).

The catalysed reaction is carbamoyl phosphate + L-aspartate = N-carbamoyl-L-aspartate + phosphate + H(+). It functions in the pathway pyrimidine metabolism; UMP biosynthesis via de novo pathway; (S)-dihydroorotate from bicarbonate: step 2/3. Functionally, catalyzes the condensation of carbamoyl phosphate and aspartate to form carbamoyl aspartate and inorganic phosphate, the committed step in the de novo pyrimidine nucleotide biosynthesis pathway. This chain is Aspartate carbamoyltransferase catalytic subunit, found in Methanocaldococcus jannaschii (strain ATCC 43067 / DSM 2661 / JAL-1 / JCM 10045 / NBRC 100440) (Methanococcus jannaschii).